The chain runs to 356 residues: Protein-glutamate methylesterase/protein-glutamine glutaminase (356 aa).

A Response regulatory domain is found at 4–121; it reads KVLIVDDSAL…QSGMLEYTDL (118 aa). Asp-55 is subject to 4-aspartylphosphate. Residues 156–349 enclose the CheB-type methylesterase domain; it reads PLTSSEKLII…RRVLEFFAAH (194 aa). Residues Ser-169, His-195, and Asp-291 contribute to the active site.

This sequence belongs to the CheB family. In terms of processing, phosphorylated by CheA. Phosphorylation of the N-terminal regulatory domain activates the methylesterase activity.

It is found in the cytoplasm. It catalyses the reaction [protein]-L-glutamate 5-O-methyl ester + H2O = L-glutamyl-[protein] + methanol + H(+). The catalysed reaction is L-glutaminyl-[protein] + H2O = L-glutamyl-[protein] + NH4(+). Functionally, involved in chemotaxis. Part of a chemotaxis signal transduction system that modulates chemotaxis in response to various stimuli. Catalyzes the demethylation of specific methylglutamate residues introduced into the chemoreceptors (methyl-accepting chemotaxis proteins or MCP) by CheR. Also mediates the irreversible deamidation of specific glutamine residues to glutamic acid. The polypeptide is Protein-glutamate methylesterase/protein-glutamine glutaminase (Thiobacillus denitrificans (strain ATCC 25259 / T1)).